A 78-amino-acid polypeptide reads, in one-letter code: Large ribosomal subunit protein bL28 (78 aa).

The protein belongs to the bacterial ribosomal protein bL28 family.

The chain is Large ribosomal subunit protein bL28 from Prochlorococcus marinus (strain MIT 9303).